The primary structure comprises 379 residues: Cobalt-precorrin-5B C(1)-methyltransferase (379 aa).

This sequence belongs to the CbiD family.

The catalysed reaction is Co-precorrin-5B + S-adenosyl-L-methionine = Co-precorrin-6A + S-adenosyl-L-homocysteine. It participates in cofactor biosynthesis; adenosylcobalamin biosynthesis; cob(II)yrinate a,c-diamide from sirohydrochlorin (anaerobic route): step 6/10. Functionally, catalyzes the methylation of C-1 in cobalt-precorrin-5B to form cobalt-precorrin-6A. The chain is Cobalt-precorrin-5B C(1)-methyltransferase from Salmonella paratyphi A (strain ATCC 9150 / SARB42).